Here is a 488-residue protein sequence, read N- to C-terminus: Ribulose bisphosphate carboxylase large chain (488 aa).

2 residues coordinate substrate: N127 and T177. K179 functions as the Proton acceptor in the catalytic mechanism. K181 is a substrate binding site. K205, D207, and E208 together coordinate Mg(2+). K205 is subject to N6-carboxylysine. Residue H297 is the Proton acceptor of the active site. Substrate is bound by residues R298, H330, and S382.

The protein belongs to the RuBisCO large chain family. Type I subfamily. As to quaternary structure, heterohexadecamer of 8 large chains and 8 small chains. Requires Mg(2+) as cofactor.

It localises to the plastid. The protein resides in the chloroplast. The enzyme catalyses 2 (2R)-3-phosphoglycerate + 2 H(+) = D-ribulose 1,5-bisphosphate + CO2 + H2O. The catalysed reaction is D-ribulose 1,5-bisphosphate + O2 = 2-phosphoglycolate + (2R)-3-phosphoglycerate + 2 H(+). Functionally, ruBisCO catalyzes two reactions: the carboxylation of D-ribulose 1,5-bisphosphate, the primary event in carbon dioxide fixation, as well as the oxidative fragmentation of the pentose substrate in the photorespiration process. Both reactions occur simultaneously and in competition at the same active site. The protein is Ribulose bisphosphate carboxylase large chain of Pylaiella littoralis (Seaweed).